The sequence spans 62 residues: Large ribosomal subunit protein eL24 (62 aa).

The Zn(2+) site is built by Cys6, Cys9, Cys32, and Cys36. The C4-type zinc-finger motif lies at 6–36; sequence CYFCGKMLEPGTGKLYVKKDGSTYFMCSSKC.

Belongs to the eukaryotic ribosomal protein eL24 family. As to quaternary structure, part of the 50S ribosomal subunit. Forms a cluster with proteins L3 and L14. Zn(2+) serves as cofactor.

Binds to the 23S rRNA. The polypeptide is Large ribosomal subunit protein eL24 (Methanosarcina acetivorans (strain ATCC 35395 / DSM 2834 / JCM 12185 / C2A)).